Here is a 201-residue protein sequence, read N- to C-terminus: Recombination protein RecR (201 aa).

The segment at 57–72 adopts a C4-type zinc-finger fold; the sequence is CSDCRTFTEQDVCAIC. Positions 81–176 constitute a Toprim domain; sequence GLVCVVESPA…MASRIAHGVP (96 aa).

Belongs to the RecR family.

May play a role in DNA repair. It seems to be involved in an RecBC-independent recombinational process of DNA repair. It may act with RecF and RecO. The sequence is that of Recombination protein RecR from Pectobacterium atrosepticum (strain SCRI 1043 / ATCC BAA-672) (Erwinia carotovora subsp. atroseptica).